The following is a 144-amino-acid chain: Putative protein PHLOEM PROTEIN 2-LIKE B4 (144 aa).

The chain is Putative protein PHLOEM PROTEIN 2-LIKE B4 (PP2B4) from Arabidopsis thaliana (Mouse-ear cress).